The following is a 954-amino-acid chain: Glycine dehydrogenase (decarboxylating) (954 aa).

Lys-704 carries the N6-(pyridoxal phosphate)lysine modification.

This sequence belongs to the GcvP family. The glycine cleavage system is composed of four proteins: P, T, L and H. It depends on pyridoxal 5'-phosphate as a cofactor.

It catalyses the reaction N(6)-[(R)-lipoyl]-L-lysyl-[glycine-cleavage complex H protein] + glycine + H(+) = N(6)-[(R)-S(8)-aminomethyldihydrolipoyl]-L-lysyl-[glycine-cleavage complex H protein] + CO2. In terms of biological role, the glycine cleavage system catalyzes the degradation of glycine. The P protein binds the alpha-amino group of glycine through its pyridoxal phosphate cofactor; CO(2) is released and the remaining methylamine moiety is then transferred to the lipoamide cofactor of the H protein. The sequence is that of Glycine dehydrogenase (decarboxylating) from Rhizobium leguminosarum bv. trifolii (strain WSM2304).